Consider the following 328-residue polypeptide: Carbonic anhydrase-related protein 11 (328 aa).

A signal peptide spans 1–23 (MGAAPRLSAPRVLVLWAALGAAA). In terms of domain architecture, Alpha-carbonic anhydrase spans 33–303 (DWWSYKDNLQ…LAHRALRGNR (271 aa)). N-linked (GlcNAc...) asparagine glycosylation occurs at Asn118. A disordered region spans residues 300-328 (RGNRDPRHPERRCRGPNYRLHVDDVPHGL). Over residues 319–328 (LHVDDVPHGL) the composition is skewed to basic and acidic residues.

This sequence belongs to the alpha-carbonic anhydrase family.

The protein localises to the secreted. Its function is as follows. Does not have a catalytic activity. This chain is Carbonic anhydrase-related protein 11 (CA11), found in Ovis aries (Sheep).